The sequence spans 163 residues: Nucleotide-binding protein Mmcs_0777 (163 aa).

Belongs to the YajQ family.

In terms of biological role, nucleotide-binding protein. The polypeptide is Nucleotide-binding protein Mmcs_0777 (Mycobacterium sp. (strain MCS)).